The sequence spans 582 residues: Protein NRT1/ PTR FAMILY 5.2 (582 aa).

The next 11 helical transmembrane spans lie at 77–97, 100–120, 141–161, 189–209, 217–237, 334–354, 370–390, 408–428, 452–472, 493–515, and 538–558; these read WVGT…ALLG, ITFV…TLSV, ASVL…IGTG, FFNW…TVLV, WTLG…IFLL, PVLF…TLFV, IPPA…IVLY, ITLL…MIVA, LPLT…ADSF, GTSY…LSTV, and YYYL…LVVV.

This sequence belongs to the major facilitator superfamily. Proton-dependent oligopeptide transporter (POT/PTR) (TC 2.A.17) family. As to expression, expressed in roots. Detected in shoots, leaves and flowers.

Its subcellular location is the membrane. Functionally, peptide transporter involved in stress tolerance in seeds during germination and in defense against virulent bacterial pathogens. The protein is Protein NRT1/ PTR FAMILY 5.2 (NPF5.2) of Arabidopsis thaliana (Mouse-ear cress).